A 238-amino-acid chain; its full sequence is Probable transcriptional regulatory protein SERP0322 (238 aa).

It belongs to the TACO1 family. YeeN subfamily.

It is found in the cytoplasm. This chain is Probable transcriptional regulatory protein SERP0322, found in Staphylococcus epidermidis (strain ATCC 35984 / DSM 28319 / BCRC 17069 / CCUG 31568 / BM 3577 / RP62A).